The primary structure comprises 762 residues: 5-methyltetrahydropteroyltriglutamate--homocysteine methyltransferase (762 aa).

5-methyltetrahydropteroyltri-L-glutamate contacts are provided by residues 17-20 and Lys-111; that span reads REWK. Residues 435–437 and Glu-488 each bind L-homocysteine; that span reads IGS. L-methionine is bound by residues 435–437 and Glu-488; that span reads IGS. 5-methyltetrahydropteroyltri-L-glutamate is bound by residues 519-520 and Trp-565; that span reads RC. Position 603 (Asp-603) interacts with L-homocysteine. Asp-603 serves as a coordination point for L-methionine. Residue Glu-609 coordinates 5-methyltetrahydropteroyltri-L-glutamate. 3 residues coordinate Zn(2+): His-645, Cys-647, and Glu-669. Catalysis depends on His-698, which acts as the Proton donor. Cys-730 contributes to the Zn(2+) binding site.

It belongs to the vitamin-B12 independent methionine synthase family. Zn(2+) is required as a cofactor.

The catalysed reaction is 5-methyltetrahydropteroyltri-L-glutamate + L-homocysteine = tetrahydropteroyltri-L-glutamate + L-methionine. It participates in amino-acid biosynthesis; L-methionine biosynthesis via de novo pathway; L-methionine from L-homocysteine (MetE route): step 1/1. Catalyzes the transfer of a methyl group from 5-methyltetrahydrofolate to homocysteine resulting in methionine formation. The protein is 5-methyltetrahydropteroyltriglutamate--homocysteine methyltransferase of Bacillus cereus (strain ZK / E33L).